We begin with the raw amino-acid sequence, 154 residues long: MDSLDQCIVNACKNSWDKSYLAGTPNKDNCSGFVQSVAAELGVPMPRGNANAMVDGLEQSWTKLASGAEAAQKAAQGFLVIAGLKGRTYGHVAVVISGPLYRQKYPMCWCGSIAGAVGQSQGLKSVGQVWNRTDRDRLNYYVYSLASCSLPRAS.

A disulfide bridge connects residues Cys7 and Cys148. The Nucleophile role is filled by Cys30. His91 functions as the Proton acceptor in the catalytic mechanism.

In terms of assembly, forms a heterotetramer with Tsi1 consisting of two Tse1 dimers and two Tsi1 dimers. Formation of the complex inactivates Tse1 enzymatic activity.

Its subcellular location is the host membrane. It localises to the secreted. The catalysed reaction is Hydrolysis of gamma-D-glutamyl bonds to the L-terminus (position 7) of meso-diaminopimelic acid (meso-A2pm) in 7-(L-Ala-gamma-D-Glu)-meso-A2pm and 7-(L-Ala-gamma-D-Glu)-7-(D-Ala)-meso-A2pm. It is required that the D-terminal amino and carboxy groups of meso-A2pm are unsubstituted.. In terms of biological role, toxin secreted by the H1 type VI (H1-T6SS) secretion system into the periplasm of recipient cells. Degrades peptidoglycan via amidase activity thereby helping itself to compete with other bacteria. To protect itself, the bacterium synthesizes immunity protein Tsi1 that specifically interacts with and inactivates cognate toxin. This chain is Peptidoglycan amidase Tse1, found in Pseudomonas aeruginosa (strain ATCC 15692 / DSM 22644 / CIP 104116 / JCM 14847 / LMG 12228 / 1C / PRS 101 / PAO1).